Consider the following 269-residue polypeptide: Putative aga operon transcriptional repressor (269 aa).

The 56-residue stretch at 15–70 (TSERREQIIQRLRQQGSVQVNDLSALYGVSTVTIRNDLAFLEKQGIAVRAYGGALI) folds into the HTH deoR-type domain. A DNA-binding region (H-T-H motif) is located at residues 32 to 51 (VQVNDLSALYGVSTVTIRND).

Its function is as follows. Probable repressor for the aga operon for N-acetyl galactosamine transport and metabolism. The polypeptide is Putative aga operon transcriptional repressor (agaR) (Escherichia coli O157:H7).